The chain runs to 157 residues: Small ribosomal subunit protein uS7 (157 aa).

This sequence belongs to the universal ribosomal protein uS7 family. As to quaternary structure, part of the 30S ribosomal subunit. Contacts proteins S9 and S11.

Functionally, one of the primary rRNA binding proteins, it binds directly to 16S rRNA where it nucleates assembly of the head domain of the 30S subunit. Is located at the subunit interface close to the decoding center, probably blocks exit of the E-site tRNA. This is Small ribosomal subunit protein uS7 from Leptospira interrogans serogroup Icterohaemorrhagiae serovar copenhageni (strain Fiocruz L1-130).